A 393-amino-acid polypeptide reads, in one-letter code: Probable xylan O-acetyltransferase 11 (393 aa).

At 1 to 9 (MHQPAIMQR) the chain is on the cytoplasmic side. A helical; Signal-anchor for type II membrane protein transmembrane segment spans residues 10-26 (ALAVVALLAAAAAIAAA). The Lumenal portion of the chain corresponds to 27–393 (QGESPELLPF…LFFPARDEAI (367 aa)). Disulfide bonds link Cys-45/Cys-96, Cys-67/Cys-132, Cys-76/Cys-368, and Cys-283/Cys-364. The N-linked (GlcNAc...) asparagine glycan is linked to Asn-102. Positions 119-121 (GDS) match the GDS motif motif. The Nucleophile role is filled by Ser-121. Asn-325 carries an N-linked (GlcNAc...) asparagine glycan. Residue Asp-363 is the Proton donor of the active site. The short motif at 363–366 (DCTH) is the DXXH motif element. His-366 serves as the catalytic Proton acceptor.

The protein belongs to the PC-esterase family. TBL subfamily. As to expression, expressed in roots, leaves and stems.

The protein localises to the golgi apparatus membrane. Probable xylan acetyltransferase required for 2-O- and 3-O-monoacetylation of xylosyl residues in xylan. Possesses extremely low activity in vitro. This Oryza sativa subsp. japonica (Rice) protein is Probable xylan O-acetyltransferase 11.